A 185-amino-acid chain; its full sequence is ATP-dependent protease subunit HslV (185 aa).

The active site involves Thr12. The Na(+) site is built by Ala168, Cys171, and Thr174.

The protein belongs to the peptidase T1B family. HslV subfamily. A double ring-shaped homohexamer of HslV is capped on each side by a ring-shaped HslU homohexamer. The assembly of the HslU/HslV complex is dependent on binding of ATP.

The protein resides in the cytoplasm. It catalyses the reaction ATP-dependent cleavage of peptide bonds with broad specificity.. Its activity is regulated as follows. Allosterically activated by HslU binding. Protease subunit of a proteasome-like degradation complex believed to be a general protein degrading machinery. This is ATP-dependent protease subunit HslV from Roseobacter denitrificans (strain ATCC 33942 / OCh 114) (Erythrobacter sp. (strain OCh 114)).